A 289-amino-acid chain; its full sequence is Thioredoxin-like protein 1 (289 aa).

Positions Val-2–Asn-109 constitute a Thioredoxin domain. Cys-34 and Cys-37 are joined by a disulfide. At Ser-113 the chain carries Phosphoserine. Residues Glu-115–Lys-285 enclose the PITH domain.

Component of the 19S regulatory cap of the 26S proteasome. Interacts with PSMD14/RPN11. Interacts with, and reduces EEF1A1.

The protein resides in the cytoplasm. Its subcellular location is the nucleus. Its function is as follows. Active thioredoxin with a redox potential of about -250 mV. The polypeptide is Thioredoxin-like protein 1 (Txnl1) (Mus musculus (Mouse)).